A 159-amino-acid polypeptide reads, in one-letter code: Dihydrofolate reductase (159 aa).

A DHFR domain is found at 1-158 (MISLIAALAV…HSYCFEILER (158 aa)). Residue isoleucine 5 participates in substrate binding. Residues alanine 7 and 13–19 (VIGMENA) each bind NADP(+). A substrate-binding site is contributed by aspartate 27. 45-46 (LT) contacts NADP(+). 2 residues coordinate substrate: arginine 52 and arginine 57. Residues 63–64 (SS), lysine 76, and 95–102 (GGGRVYEQ) each bind NADP(+). Threonine 113 contributes to the substrate binding site.

It belongs to the dihydrofolate reductase family.

The enzyme catalyses (6S)-5,6,7,8-tetrahydrofolate + NADP(+) = 7,8-dihydrofolate + NADPH + H(+). It participates in cofactor biosynthesis; tetrahydrofolate biosynthesis; 5,6,7,8-tetrahydrofolate from 7,8-dihydrofolate: step 1/1. In terms of biological role, key enzyme in folate metabolism. Catalyzes an essential reaction for de novo glycine and purine synthesis, and for DNA precursor synthesis. The chain is Dihydrofolate reductase (folA) from Klebsiella aerogenes (Enterobacter aerogenes).